The sequence spans 428 residues: Enolase 3 (428 aa).

Gln-163 lines the (2R)-2-phosphoglycerate pocket. The active-site Proton donor is the Glu-205. Mg(2+) contacts are provided by Asp-242, Glu-286, and Asp-313. Residues Lys-338, Arg-367, Ser-368, and Lys-389 each coordinate (2R)-2-phosphoglycerate. Residue Lys-338 is the Proton acceptor of the active site.

This sequence belongs to the enolase family. The cofactor is Mg(2+).

The protein localises to the cytoplasm. Its subcellular location is the secreted. It is found in the cell surface. The enzyme catalyses (2R)-2-phosphoglycerate = phosphoenolpyruvate + H2O. It participates in carbohydrate degradation; glycolysis; pyruvate from D-glyceraldehyde 3-phosphate: step 4/5. In terms of biological role, catalyzes the reversible conversion of 2-phosphoglycerate (2-PG) into phosphoenolpyruvate (PEP). It is essential for the degradation of carbohydrates via glycolysis. In Lactobacillus johnsonii (strain CNCM I-12250 / La1 / NCC 533), this protein is Enolase 3.